The sequence spans 507 residues: Serine/threonine-protein kinase BSK11 (507 aa).

Residue Gly-2 is the site of N-myristoyl glycine attachment. A compositionally biased stretch (basic and acidic residues) spans 16 to 26 (DKKITSDDLSG). Residues 16–44 (DKKITSDDLSGRRGKGAKRGNRHRHANIN) are disordered. Positions 27–41 (RRGKGAKRGNRHRHA) are enriched in basic residues. Residues 75-332 (NAVVSVCSDQ…GDIISVITTL (258 aa)) form the Protein kinase domain. Residues 81-89 (CSDQEPNLV) and Lys-106 each bind ATP. Catalysis depends on Asp-200, which acts as the Proton acceptor.

Belongs to the protein kinase superfamily. Ser/Thr protein kinase family. As to quaternary structure, interacts with BRI1, ASK7/BIN2, BSK1, BSK6 and BSK8. Phosphorylated by BRI1, ASK7/BIN2 and ASK9/BIL2.

The protein resides in the cell membrane. It catalyses the reaction L-seryl-[protein] + ATP = O-phospho-L-seryl-[protein] + ADP + H(+). The catalysed reaction is L-threonyl-[protein] + ATP = O-phospho-L-threonyl-[protein] + ADP + H(+). Probable serine/threonine kinase that acts as a positive regulator of brassinosteroid (BR) signaling downstream of the receptor kinase BRI1. This Arabidopsis thaliana (Mouse-ear cress) protein is Serine/threonine-protein kinase BSK11.